The sequence spans 271 residues: Phosphatidylglycerol--prolipoprotein diacylglyceryl transferase (271 aa).

3 helical membrane-spanning segments follow: residues 17–37, 63–83, and 95–115; these read LAIH…FFLA, ILFL…CLFY, and IFAV…VLVS. R146 lines the a 1,2-diacyl-sn-glycero-3-phospho-(1'-sn-glycerol) pocket. A run of 3 helical transmembrane segments spans residues 182–202, 209–229, and 243–263; these read SQVY…WLYA, GQVS…AEFF, and MSMG…LWIW.

Belongs to the Lgt family.

It localises to the cell inner membrane. It catalyses the reaction L-cysteinyl-[prolipoprotein] + a 1,2-diacyl-sn-glycero-3-phospho-(1'-sn-glycerol) = an S-1,2-diacyl-sn-glyceryl-L-cysteinyl-[prolipoprotein] + sn-glycerol 1-phosphate + H(+). It functions in the pathway protein modification; lipoprotein biosynthesis (diacylglyceryl transfer). Its function is as follows. Catalyzes the transfer of the diacylglyceryl group from phosphatidylglycerol to the sulfhydryl group of the N-terminal cysteine of a prolipoprotein, the first step in the formation of mature lipoproteins. The chain is Phosphatidylglycerol--prolipoprotein diacylglyceryl transferase from Polaromonas naphthalenivorans (strain CJ2).